The sequence spans 252 residues: 5-oxoprolinase subunit A (252 aa).

It belongs to the LamB/PxpA family. As to quaternary structure, forms a complex composed of PxpA, PxpB and PxpC.

The catalysed reaction is 5-oxo-L-proline + ATP + 2 H2O = L-glutamate + ADP + phosphate + H(+). Its function is as follows. Catalyzes the cleavage of 5-oxoproline to form L-glutamate coupled to the hydrolysis of ATP to ADP and inorganic phosphate. In Mycobacterium ulcerans (strain Agy99), this protein is 5-oxoprolinase subunit A.